The sequence spans 353 residues: Photosystem II D2 protein (353 aa).

Residue T2 is modified to N-acetylthreonine. T2 carries the post-translational modification Phosphothreonine. The chain crosses the membrane as a helical span at residues 41–61 (CAYFSLGGWFTGTTFVTSWYT). Residue H118 participates in chlorophyll a binding. A helical membrane pass occupies residues 125-141 (GFMLRQFELARSVQLRP). Pheophytin a contacts are provided by Q130 and N143. A helical transmembrane segment spans residues 153-166 (VFVSVFLIYPLGQS). H198 contacts chlorophyll a. A helical membrane pass occupies residues 208–228 (AALLCAIHGATVENTLFEDGD). Residues H215 and F262 each coordinate a plastoquinone. Residue H215 coordinates Fe cation. H269 provides a ligand contact to Fe cation. Residues 279-295 (GLWMSAIGVVGLALNLR) form a helical membrane-spanning segment.

This sequence belongs to the reaction center PufL/M/PsbA/D family. PSII is composed of 1 copy each of membrane proteins PsbA, PsbB, PsbC, PsbD, PsbE, PsbF, PsbH, PsbI, PsbJ, PsbK, PsbL, PsbM, PsbT, PsbX, PsbY, PsbZ, Psb30/Ycf12, at least 3 peripheral proteins of the oxygen-evolving complex and a large number of cofactors. It forms dimeric complexes. It depends on The D1/D2 heterodimer binds P680, chlorophylls that are the primary electron donor of PSII, and subsequent electron acceptors. It shares a non-heme iron and each subunit binds pheophytin, quinone, additional chlorophylls, carotenoids and lipids. There is also a Cl(-1) ion associated with D1 and D2, which is required for oxygen evolution. The PSII complex binds additional chlorophylls, carotenoids and specific lipids. as a cofactor.

The protein resides in the plastid. Its subcellular location is the chloroplast thylakoid membrane. The enzyme catalyses 2 a plastoquinone + 4 hnu + 2 H2O = 2 a plastoquinol + O2. Its function is as follows. Photosystem II (PSII) is a light-driven water:plastoquinone oxidoreductase that uses light energy to abstract electrons from H(2)O, generating O(2) and a proton gradient subsequently used for ATP formation. It consists of a core antenna complex that captures photons, and an electron transfer chain that converts photonic excitation into a charge separation. The D1/D2 (PsbA/PsbD) reaction center heterodimer binds P680, the primary electron donor of PSII as well as several subsequent electron acceptors. D2 is needed for assembly of a stable PSII complex. In Physcomitrium patens (Spreading-leaved earth moss), this protein is Photosystem II D2 protein.